The chain runs to 518 residues: MSKRALISVSDKEGIVEFAKEIRELGWEIISTGGTKAVLDQEEIPNIAIDEVTGFPEMMDGRLKTLHPLIHGALLGRRDLESHMKSMTEHHISPIDLVVVNLYPFKETLLAGGSQAEMIEKIDIGGPSMLRSAAKNHASVTVVCDPNDYEKVLTELSVKGETSLSFRQQLAAKVFRHTASYDALIAQYLTEEFPVENVKPEKLTLTYDLKQGMRYGENPQQNADFYESGIPTTYSIAQSKQIHGKELSYNNVRDADAALQIARDFEEPTVVALKHMNPCGIGTATDIEKAWDYAYEADPVSIFGGIIVLNREVTLATAQKMSKIFLEIIIAPSYSKEALEVLSKKKNIRLLTVDFSKKEASEKEALVTGVLGGLLVQNQDVIVENPKEWTVATKVQPTDRQMEAMKFAWKAVKFVKSNGIIVTNDHQTLGVGPGQTNRVGSVKIALEATADKSVELQENAVLGSDAFFPFADNIDEIAKAGIKAIVQPGGSVRDQEVIDACDKYGIAMVFTGLRHFRH.

The MGS-like domain maps to 1 to 144; it reads MSKRALISVS…KNHASVTVVC (144 aa).

Belongs to the PurH family.

The enzyme catalyses (6R)-10-formyltetrahydrofolate + 5-amino-1-(5-phospho-beta-D-ribosyl)imidazole-4-carboxamide = 5-formamido-1-(5-phospho-D-ribosyl)imidazole-4-carboxamide + (6S)-5,6,7,8-tetrahydrofolate. It catalyses the reaction IMP + H2O = 5-formamido-1-(5-phospho-D-ribosyl)imidazole-4-carboxamide. It functions in the pathway purine metabolism; IMP biosynthesis via de novo pathway; 5-formamido-1-(5-phospho-D-ribosyl)imidazole-4-carboxamide from 5-amino-1-(5-phospho-D-ribosyl)imidazole-4-carboxamide (10-formyl THF route): step 1/1. It participates in purine metabolism; IMP biosynthesis via de novo pathway; IMP from 5-formamido-1-(5-phospho-D-ribosyl)imidazole-4-carboxamide: step 1/1. This chain is Bifunctional purine biosynthesis protein PurH, found in Lactococcus lactis subsp. lactis (strain IL1403) (Streptococcus lactis).